Here is a 240-residue protein sequence, read N- to C-terminus: Axial regulator YABBY 3 (240 aa).

The C4-type zinc finger occupies 30-57; the sequence is CSFCDTVLAVSVPPSSLFKTVTVRCGHC. The disordered stretch occupies residues 135 to 156; the sequence is DHLQEMPRPPPANRPPEKRQRV.

This sequence belongs to the YABBY family. Interacts with SPL/NZZ. Interacts with SPEAR2. Binds to LUG and LUH; these complexes promote adaxial cell identity in leaves as well as embryonic shoot apical meristem (SAM) initiation and postembryonic SAM maintenance. In terms of tissue distribution, expressed in abaxial regions of lateral aerial organ primordia leading to cotyledons, leaves, flower meristems, sepals, petals, stamen and carpels, but not in roots.

It is found in the nucleus. In terms of biological role, involved in the abaxial cell fate determination during embryogenesis and organogenesis. Regulates the initiation of embryonic shoot apical meristem (SAM) development. Contributes to the repression of KNOX genes (STM, KNAT1/BP and KNAT2) to avoid ectopic meristems. Binds DNA without sequence specificity. The polypeptide is Axial regulator YABBY 3 (YAB3) (Arabidopsis thaliana (Mouse-ear cress)).